Consider the following 37-residue polypeptide: GLFSVVTGVLKAVGKNVAKNVGGSLLEQLKCKISGGC.

C31 and C37 form a disulfide bridge.

In terms of tissue distribution, expressed by the skin glands.

It localises to the secreted. In terms of biological role, antimicrobial peptide. Active against the Gram-positive bacterium S.aureus (MIC=15 uM) and the Gram-negative bacterium E.coli (MIC=30 uM). The protein is Brevinin-2DYe of Rana dybowskii (Dybovsky's frog).